The chain runs to 147 residues: UPF0178 protein Tgr7_2584 (147 aa).

The protein belongs to the UPF0178 family.

The protein is UPF0178 protein Tgr7_2584 of Thioalkalivibrio sulfidiphilus (strain HL-EbGR7).